The primary structure comprises 446 residues: N-succinylarginine dihydrolase (446 aa).

Substrate contacts are provided by residues 19–28 (AGLSFGNVAS), N110, and 137–138 (HR). Residue E174 is part of the active site. R213 contributes to the substrate binding site. H249 is a catalytic residue. 2 residues coordinate substrate: D251 and N364. C370 (nucleophile) is an active-site residue.

This sequence belongs to the succinylarginine dihydrolase family. In terms of assembly, homodimer.

It catalyses the reaction N(2)-succinyl-L-arginine + 2 H2O + 2 H(+) = N(2)-succinyl-L-ornithine + 2 NH4(+) + CO2. Its pathway is amino-acid degradation; L-arginine degradation via AST pathway; L-glutamate and succinate from L-arginine: step 2/5. In terms of biological role, catalyzes the hydrolysis of N(2)-succinylarginine into N(2)-succinylornithine, ammonia and CO(2). The protein is N-succinylarginine dihydrolase of Burkholderia cenocepacia (strain HI2424).